The following is a 996-amino-acid chain: Oxysterol-binding protein homolog 3 (996 aa).

A GOLD domain region spans residues 1–183 (METIDIQNRS…KKKILFNASV (183 aa)). A disordered region spans residues 75 to 114 (GSSSNIEEHHRRSSQHSHSSSNGSDNKRKERSYSSLSISG). A phosphoserine mark is found at Ser-190 and Ser-193. Thr-210 is modified (phosphothreonine). The region spanning 221 to 315 (GRYLQGYLLK…WVDALQTCFD (95 aa)) is the PH domain. Thr-323 carries the phosphothreonine modification. Ser-324 is subject to Phosphoserine. Phosphothreonine is present on residues Thr-325 and Thr-352. The tract at residues 338–372 (EVINKSSPQDHDHLTPTATTKSALSHRQHTQKDMD) is disordered. Positions 514-520 (EFFDAEE) match the FFAT motif. The tract at residues 556-611 (KEVQLSGSEQIASSSVESYTTNDENHSRKHLKNRHKNRRRGHPHHQKTKSAQSSTE) is disordered. Over residues 558–577 (VQLSGSEQIASSSVESYTTN) the composition is skewed to polar residues. Over residues 582–603 (SRKHLKNRHKNRRRGHPHHQKT) the composition is skewed to basic residues. Ser-605 is modified (phosphoserine). The OSBP-related domain (ORD) stretch occupies residues 642-982 (SLLSFLRKNV…YITGPKSYWE (341 aa)). Residues 657 to 660 (SIAM), Lys-717, 745 to 746 (HR), and 945 to 949 (EQLQR) contribute to the a 1,2-diacyl-sn-glycero-3-phospho-(1D-myo-inositol 4-phosphate) site.

The protein belongs to the OSBP family. Interacts with SCS2.

Its subcellular location is the cytoplasm. It localises to the endoplasmic reticulum membrane. In terms of biological role, lipid transport protein (LTP) involved in non-vesicular transfer of lipids between membranes. Functions in phosphoinositide-coupled directional transport of various lipids by carrying the lipid molecule in a hydrophobic pocket and transferring it between membranes through the cytosol. Involved in maintenance of intracellular sterol distribution and homeostasis. May serve as a sensor of PI4P levels at PM-ER membrane contact site, regulating PI4P phosphatase SAC1 activity. May be involved in ergosterol transport from the plasma membrane (PM) to the ER, however it does not bind sterols directly. Plays a role in the positive regulation of vesicular transport of ceramide from the ER to the Golgi, negatively regulating COPII-mediated ER export of cargos. The polypeptide is Oxysterol-binding protein homolog 3 (Saccharomyces cerevisiae (strain ATCC 204508 / S288c) (Baker's yeast)).